The following is a 64-amino-acid chain: Phylloxin-B1 (64 aa).

The first 22 residues, 1-22, serve as a signal peptide directing secretion; the sequence is MVFLKKSLLLVLFVGLVSLSIC. A propeptide spanning residues 23-42 is cleaved from the precursor; that stretch reads EENKREEHEEIEENKEKAEE. The residue at position 63 (glutamine 63) is a Glutamine amide.

In terms of tissue distribution, expressed by the skin glands.

The protein localises to the secreted. Its function is as follows. Antimicrobial peptide against the wall-less bacteria A.laidlawii and S.melliferum, the Gram-positive bacteria B.megaterium KM, C.glutamicum ATCC 27853 and M.luteus ATCC 27853 and the Gram-negative-bacteria R.meliloti 102F34 and E.coli K12. In Phyllomedusa bicolor (Two-colored leaf frog), this protein is Phylloxin-B1.